A 185-amino-acid chain; its full sequence is Ribosome-recycling factor (185 aa).

Belongs to the RRF family.

The protein resides in the cytoplasm. Functionally, responsible for the release of ribosomes from messenger RNA at the termination of protein biosynthesis. May increase the efficiency of translation by recycling ribosomes from one round of translation to another. The polypeptide is Ribosome-recycling factor (Geobacter metallireducens (strain ATCC 53774 / DSM 7210 / GS-15)).